We begin with the raw amino-acid sequence, 558 residues long: uncharacterized protein (558 aa).

Positions 531 to 558 (NEDDGTSASPTAMTFDMPPEHPFYSHYR) are disordered.

This is an uncharacterized protein from Saccharomyces cerevisiae (strain ATCC 204508 / S288c) (Baker's yeast).